Consider the following 421-residue polypeptide: Gamma-glutamyl phosphate reductase (421 aa).

The protein belongs to the gamma-glutamyl phosphate reductase family.

The protein resides in the cytoplasm. It catalyses the reaction L-glutamate 5-semialdehyde + phosphate + NADP(+) = L-glutamyl 5-phosphate + NADPH + H(+). It functions in the pathway amino-acid biosynthesis; L-proline biosynthesis; L-glutamate 5-semialdehyde from L-glutamate: step 2/2. Its function is as follows. Catalyzes the NADPH-dependent reduction of L-glutamate 5-phosphate into L-glutamate 5-semialdehyde and phosphate. The product spontaneously undergoes cyclization to form 1-pyrroline-5-carboxylate. In Nitrosospira multiformis (strain ATCC 25196 / NCIMB 11849 / C 71), this protein is Gamma-glutamyl phosphate reductase.